Reading from the N-terminus, the 562-residue chain is MRSDEVKKGFDRTPHRSLLRATGLKDEDFDKPFIGVANSFIELIPGHFFLDKVSAIIKEEIRANGCVPFEFNTIGVDDGIAMGHDGMLFSLPSRELIANSIETVMNAHKLDAMIAIPNCDKIVPGMIMGALRVNVPTIFVSGGPMQKGYTKDGTPIDLATAFEAVGKFEAGDISEEQLKDIECNACPSGGSCSGMFTANSMNTLMEAMGIALPGNGTILALTPQREVLYRQAARRICEIAKDKASREKYKLKNILNENAVKNAFAVDMAMGGSSNTVLHMLAISKEAGVNFELKDINAISKRVSHIAKISPSLSTVHMEDINKAGGVNAVMKEMTKRGNDILADNLTISGETVLEKIKDAYIKDTNIIHTIDNPYSQVGGLAILYGNLAEQGAVIKTAGITGSRVFTGTAVCFDGQPEAIKGIVSGKVKAGNVVVIRYEGPKGGPGMQEMLAPTSLIMGMGLGSSVALITDGRFSGATRGASIGHVSPEAAEGGMIGLLKDGDEIHIDVDQYILSVNLSDEEIAKRKADFKPLKKPLNSSWLGQYRALVTNASSGAVLKTDL.

Aspartate 78 is a binding site for Mg(2+). Cysteine 119 is a [2Fe-2S] cluster binding site. Mg(2+) contacts are provided by aspartate 120 and lysine 121. Lysine 121 is subject to N6-carboxylysine. A [2Fe-2S] cluster-binding site is contributed by cysteine 192. Mg(2+) is bound at residue glutamate 449. Catalysis depends on serine 475, which acts as the Proton acceptor.

The protein belongs to the IlvD/Edd family. In terms of assembly, homodimer. [2Fe-2S] cluster serves as cofactor. Requires Mg(2+) as cofactor.

It catalyses the reaction (2R)-2,3-dihydroxy-3-methylbutanoate = 3-methyl-2-oxobutanoate + H2O. It carries out the reaction (2R,3R)-2,3-dihydroxy-3-methylpentanoate = (S)-3-methyl-2-oxopentanoate + H2O. Its pathway is amino-acid biosynthesis; L-isoleucine biosynthesis; L-isoleucine from 2-oxobutanoate: step 3/4. It functions in the pathway amino-acid biosynthesis; L-valine biosynthesis; L-valine from pyruvate: step 3/4. Functionally, functions in the biosynthesis of branched-chain amino acids. Catalyzes the dehydration of (2R,3R)-2,3-dihydroxy-3-methylpentanoate (2,3-dihydroxy-3-methylvalerate) into 2-oxo-3-methylpentanoate (2-oxo-3-methylvalerate) and of (2R)-2,3-dihydroxy-3-methylbutanoate (2,3-dihydroxyisovalerate) into 2-oxo-3-methylbutanoate (2-oxoisovalerate), the penultimate precursor to L-isoleucine and L-valine, respectively. The protein is Dihydroxy-acid dehydratase of Aliarcobacter butzleri (strain RM4018) (Arcobacter butzleri).